A 484-amino-acid polypeptide reads, in one-letter code: ATP-dependent RNA helicase DDX25 (484 aa).

Position 49 is a phosphothreonine (Thr49). The Nuclear export signal motif lies at 62–75 (LAANSLLNKLIRQS). Residues 98 to 126 (KTFEELRLKEELLKGIYAMGFNRPSKIQE) carry the Q motif motif. The Nuclear localization signal motif lies at 101-115 (EELRLKEELLKGIYA). A Helicase ATP-binding domain is found at 131–301 (MMLAHPPQNL…ERIIPDPNVI (171 aa)). 144-151 (SQSGTGKT) serves as a coordination point for ATP. The short motif at 248–251 (DEAD) is the DEAD box element. One can recognise a Helicase C-terminal domain in the interval 312–479 (NIRQYYVLCE…QLDPEDMDEI (168 aa)).

The protein belongs to the DEAD box helicase family. Phosphorylated on threonine residues. The phosphorylated form is found in the cytoplasm but not in the nucleus. Isoform 1 is expressed in germ cells. Isoform 2 is expressed in Leydig cells and in round spermatids of adult testis upon gonadotropin stimulation.

Its subcellular location is the cytoplasm. The protein localises to the nucleus. It catalyses the reaction ATP + H2O = ADP + phosphate + H(+). ATP-dependent RNA helicase. Required for mRNA export and translation regulation during spermatid development. The polypeptide is ATP-dependent RNA helicase DDX25 (Ddx25) (Mus musculus (Mouse)).